A 154-amino-acid chain; its full sequence is Myoglobin (154 aa).

The Globin domain maps to 2 to 148; sequence GLSDQEWQQV…FRNDMASKYK (147 aa). His65 lines the nitrite pocket. His65 lines the O2 pocket. His94 provides a ligand contact to heme b.

This sequence belongs to the globin family. Monomeric.

It is found in the cytoplasm. Its subcellular location is the sarcoplasm. It carries out the reaction Fe(III)-heme b-[protein] + nitric oxide + H2O = Fe(II)-heme b-[protein] + nitrite + 2 H(+). The enzyme catalyses H2O2 + AH2 = A + 2 H2O. In terms of biological role, monomeric heme protein which primary function is to store oxygen and facilitate its diffusion within muscle tissues. Reversibly binds oxygen through a pentacoordinated heme iron and enables its timely and efficient release as needed during periods of heightened demand. Depending on the oxidative conditions of tissues and cells, and in addition to its ability to bind oxygen, it also has a nitrite reductase activity whereby it regulates the production of bioactive nitric oxide. Under stress conditions, like hypoxia and anoxia, it also protects cells against reactive oxygen species thanks to its pseudoperoxidase activity. This chain is Myoglobin (MB), found in Cerorhinca monocerata (Rhinoceros auklet).